A 436-amino-acid chain; its full sequence is Trigger factor (436 aa).

Residues 162-247 (GDRVIIDFEG…LNNVSEPTLP (86 aa)) enclose the PPIase FKBP-type domain.

Belongs to the FKBP-type PPIase family. Tig subfamily.

Its subcellular location is the cytoplasm. It catalyses the reaction [protein]-peptidylproline (omega=180) = [protein]-peptidylproline (omega=0). Its function is as follows. Involved in protein export. Acts as a chaperone by maintaining the newly synthesized protein in an open conformation. Functions as a peptidyl-prolyl cis-trans isomerase. The protein is Trigger factor of Neisseria gonorrhoeae (strain ATCC 700825 / FA 1090).